A 247-amino-acid polypeptide reads, in one-letter code: Cell division protein ZapD (247 aa).

It belongs to the ZapD family. In terms of assembly, interacts with FtsZ.

The protein resides in the cytoplasm. In terms of biological role, cell division factor that enhances FtsZ-ring assembly. Directly interacts with FtsZ and promotes bundling of FtsZ protofilaments, with a reduction in FtsZ GTPase activity. The polypeptide is Cell division protein ZapD (Enterobacter sp. (strain 638)).